A 507-amino-acid polypeptide reads, in one-letter code: Maturase K (507 aa).

It belongs to the intron maturase 2 family. MatK subfamily.

Its subcellular location is the plastid. The protein localises to the chloroplast. Usually encoded in the trnK tRNA gene intron. Probably assists in splicing its own and other chloroplast group II introns. This Lyonia ligustrina (Maleberry) protein is Maturase K.